A 249-amino-acid chain; its full sequence is Isoprenyl transferase (249 aa).

Residue Asp-25 is part of the active site. Asp-25 contacts Mg(2+). Substrate-binding positions include 26–29 (GNGR), Trp-30, Arg-38, His-42, and 70–72 (STE). Catalysis depends on Asn-73, which acts as the Proton acceptor. Substrate contacts are provided by residues Trp-74, Arg-76, Arg-197, and 203-205 (RLS). Glu-216 serves as a coordination point for Mg(2+).

Belongs to the UPP synthase family. Homodimer. Mg(2+) serves as cofactor.

Functionally, catalyzes the condensation of isopentenyl diphosphate (IPP) with allylic pyrophosphates generating different type of terpenoids. This Streptococcus pyogenes serotype M1 protein is Isoprenyl transferase.